The primary structure comprises 644 residues: Macrolide export ATP-binding/permease protein MacB (644 aa).

The ABC transporter domain maps to 6–244 (LELDGVWRRF…SQATEAQPDG (239 aa)). Position 42–49 (42–49 (GASGSGKS)) interacts with ATP. Helical transmembrane passes span 271–291 (ALTM…IAIG), 415–435 (EAVG…GVVA), 517–537 (LSLL…IGVM), 574–594 (LVCL…SFVF), and 609–629 (VIAL…FLPA).

It belongs to the ABC transporter superfamily. Macrolide exporter (TC 3.A.1.122) family. In terms of assembly, homodimer.

The protein resides in the cell inner membrane. Functionally, non-canonical ABC transporter that contains transmembrane domains (TMD), which form a pore in the inner membrane, and an ATP-binding domain (NBD), which is responsible for energy generation. Confers resistance against macrolides. The chain is Macrolide export ATP-binding/permease protein MacB from Chromobacterium violaceum (strain ATCC 12472 / DSM 30191 / JCM 1249 / CCUG 213 / NBRC 12614 / NCIMB 9131 / NCTC 9757 / MK).